Reading from the N-terminus, the 433-residue chain is Enolase (433 aa).

Q167 contacts (2R)-2-phosphoglycerate. Residue E209 is the Proton donor of the active site. Mg(2+) contacts are provided by D246, E291, and D318. The (2R)-2-phosphoglycerate site is built by K343, R372, S373, and K394. K343 (proton acceptor) is an active-site residue.

This sequence belongs to the enolase family. In terms of assembly, component of the RNA degradosome, a multiprotein complex involved in RNA processing and mRNA degradation. The cofactor is Mg(2+).

Its subcellular location is the cytoplasm. It is found in the secreted. The protein localises to the cell surface. The enzyme catalyses (2R)-2-phosphoglycerate = phosphoenolpyruvate + H2O. The protein operates within carbohydrate degradation; glycolysis; pyruvate from D-glyceraldehyde 3-phosphate: step 4/5. In terms of biological role, catalyzes the reversible conversion of 2-phosphoglycerate (2-PG) into phosphoenolpyruvate (PEP). It is essential for the degradation of carbohydrates via glycolysis. This is Enolase from Pasteurella multocida (strain Pm70).